Consider the following 196-residue polypeptide: Ribosome maturation factor RimP (196 aa).

The interval 163-196 (GLAPSKPTGPAPKRPKPKTNSSSNEPAAKKPRAE) is disordered.

The protein belongs to the RimP family.

It localises to the cytoplasm. Its function is as follows. Required for maturation of 30S ribosomal subunits. The chain is Ribosome maturation factor RimP from Stenotrophomonas maltophilia (strain R551-3).